We begin with the raw amino-acid sequence, 61 residues long: Small ribosomal subunit protein uS14 (61 aa).

4 residues coordinate Zn(2+): C24, C27, C40, and C43.

The protein belongs to the universal ribosomal protein uS14 family. Zinc-binding uS14 subfamily. Part of the 30S ribosomal subunit. Contacts proteins S3 and S10. Requires Zn(2+) as cofactor.

Its function is as follows. Binds 16S rRNA, required for the assembly of 30S particles and may also be responsible for determining the conformation of the 16S rRNA at the A site. This chain is Small ribosomal subunit protein uS14, found in Campylobacter lari (strain RM2100 / D67 / ATCC BAA-1060).